The sequence spans 142 residues: Large ribosomal subunit protein uL13 (142 aa).

It belongs to the universal ribosomal protein uL13 family. In terms of assembly, part of the 50S ribosomal subunit.

Its function is as follows. This protein is one of the early assembly proteins of the 50S ribosomal subunit, although it is not seen to bind rRNA by itself. It is important during the early stages of 50S assembly. This chain is Large ribosomal subunit protein uL13, found in Cellvibrio japonicus (strain Ueda107) (Pseudomonas fluorescens subsp. cellulosa).